A 170-amino-acid polypeptide reads, in one-letter code: Cyclic pyranopterin monophosphate synthase (170 aa).

The interval 1–25 is disordered; it reads MADPSTLTHPDPEGGVRMMDASQKS. Substrate-binding positions include 78-80 and 116-117; these read LCH and ME. The active site involves aspartate 131.

Belongs to the MoaC family. In terms of assembly, homohexamer; trimer of dimers.

The enzyme catalyses (8S)-3',8-cyclo-7,8-dihydroguanosine 5'-triphosphate = cyclic pyranopterin phosphate + diphosphate. The protein operates within cofactor biosynthesis; molybdopterin biosynthesis. In terms of biological role, catalyzes the conversion of (8S)-3',8-cyclo-7,8-dihydroguanosine 5'-triphosphate to cyclic pyranopterin monophosphate (cPMP). The chain is Cyclic pyranopterin monophosphate synthase from Salinibacter ruber (strain DSM 13855 / M31).